A 345-amino-acid chain; its full sequence is Holliday junction branch migration complex subunit RuvB (345 aa).

Residues 4 to 185 (LDNRFVTPLS…FGVLCPMEFY (182 aa)) are large ATPase domain (RuvB-L). Residues L24, R25, G66, K69, T70, T71, 132 to 134 (EDY), R175, Y185, and R222 each bind ATP. T70 contacts Mg(2+). The interval 186–256 (NEEELKDIIV…MTNKALNLLE (71 aa)) is small ATPAse domain (RuvB-S). Residues 259–345 (KEGFDSIDTK…ENINQYKFKI (87 aa)) form a head domain (RuvB-H) region. DNA is bound by residues R314 and R319.

It belongs to the RuvB family. As to quaternary structure, homohexamer. Forms an RuvA(8)-RuvB(12)-Holliday junction (HJ) complex. HJ DNA is sandwiched between 2 RuvA tetramers; dsDNA enters through RuvA and exits via RuvB. An RuvB hexamer assembles on each DNA strand where it exits the tetramer. Each RuvB hexamer is contacted by two RuvA subunits (via domain III) on 2 adjacent RuvB subunits; this complex drives branch migration. In the full resolvosome a probable DNA-RuvA(4)-RuvB(12)-RuvC(2) complex forms which resolves the HJ.

It is found in the cytoplasm. It carries out the reaction ATP + H2O = ADP + phosphate + H(+). The RuvA-RuvB-RuvC complex processes Holliday junction (HJ) DNA during genetic recombination and DNA repair, while the RuvA-RuvB complex plays an important role in the rescue of blocked DNA replication forks via replication fork reversal (RFR). RuvA specifically binds to HJ cruciform DNA, conferring on it an open structure. The RuvB hexamer acts as an ATP-dependent pump, pulling dsDNA into and through the RuvAB complex. RuvB forms 2 homohexamers on either side of HJ DNA bound by 1 or 2 RuvA tetramers; 4 subunits per hexamer contact DNA at a time. Coordinated motions by a converter formed by DNA-disengaged RuvB subunits stimulates ATP hydrolysis and nucleotide exchange. Immobilization of the converter enables RuvB to convert the ATP-contained energy into a lever motion, pulling 2 nucleotides of DNA out of the RuvA tetramer per ATP hydrolyzed, thus driving DNA branch migration. The RuvB motors rotate together with the DNA substrate, which together with the progressing nucleotide cycle form the mechanistic basis for DNA recombination by continuous HJ branch migration. Branch migration allows RuvC to scan DNA until it finds its consensus sequence, where it cleaves and resolves cruciform DNA. The polypeptide is Holliday junction branch migration complex subunit RuvB (Clostridium tetani (strain Massachusetts / E88)).